A 101-amino-acid polypeptide reads, in one-letter code: MMLEHVLVLSAYLFSIGIYGLITSRNMVRALMCLELILNAVNINFVTFSDFFDSRQLKGNIFSIFVIAIAAAEAAIGPAIVSSIYRNRKSTRINQSNLLNK.

3 helical membrane-spanning segments follow: residues 2-22, 32-52, and 61-81; these read MLEHVLVLSAYLFSIGIYGLI, MCLELILNAVNINFVTFSDFF, and IFSIFVIAIAAAEAAIGPAIV.

It belongs to the complex I subunit 4L family. In terms of assembly, NDH is composed of at least 16 different subunits, 5 of which are encoded in the nucleus.

It is found in the plastid. The protein resides in the chloroplast thylakoid membrane. The catalysed reaction is a plastoquinone + NADH + (n+1) H(+)(in) = a plastoquinol + NAD(+) + n H(+)(out). It carries out the reaction a plastoquinone + NADPH + (n+1) H(+)(in) = a plastoquinol + NADP(+) + n H(+)(out). NDH shuttles electrons from NAD(P)H:plastoquinone, via FMN and iron-sulfur (Fe-S) centers, to quinones in the photosynthetic chain and possibly in a chloroplast respiratory chain. The immediate electron acceptor for the enzyme in this species is believed to be plastoquinone. Couples the redox reaction to proton translocation, and thus conserves the redox energy in a proton gradient. The chain is NAD(P)H-quinone oxidoreductase subunit 4L, chloroplastic from Morus indica (Mulberry).